The primary structure comprises 238 residues: Sugar fermentation stimulation protein homolog (238 aa).

It belongs to the SfsA family.

This Haemophilus influenzae (strain ATCC 51907 / DSM 11121 / KW20 / Rd) protein is Sugar fermentation stimulation protein homolog.